A 248-amino-acid chain; its full sequence is Probable transcriptional regulatory protein RPD_4171 (248 aa).

The interval 1–22 is disordered; that stretch reads MAGHSQFKNIMHRKGKQDAQRS.

This sequence belongs to the TACO1 family.

It localises to the cytoplasm. The polypeptide is Probable transcriptional regulatory protein RPD_4171 (Rhodopseudomonas palustris (strain BisB5)).